A 267-amino-acid polypeptide reads, in one-letter code: tRNA pseudouridine synthase A (267 aa).

Asp-55 acts as the Nucleophile in catalysis. Tyr-111 is a substrate binding site.

This sequence belongs to the tRNA pseudouridine synthase TruA family.

The catalysed reaction is uridine(38/39/40) in tRNA = pseudouridine(38/39/40) in tRNA. Functionally, formation of pseudouridine at positions 38, 39 and 40 in the anticodon stem and loop of transfer RNAs. This Thermococcus kodakarensis (strain ATCC BAA-918 / JCM 12380 / KOD1) (Pyrococcus kodakaraensis (strain KOD1)) protein is tRNA pseudouridine synthase A.